A 178-amino-acid chain; its full sequence is Large ribosomal subunit protein uL6 (178 aa).

This sequence belongs to the universal ribosomal protein uL6 family. In terms of assembly, part of the 50S ribosomal subunit.

Its function is as follows. This protein binds to the 23S rRNA, and is important in its secondary structure. It is located near the subunit interface in the base of the L7/L12 stalk, and near the tRNA binding site of the peptidyltransferase center. The sequence is that of Large ribosomal subunit protein uL6 from Streptococcus equi subsp. zooepidemicus (strain H70).